A 56-amino-acid chain; its full sequence is Attractin (56 aa).

3 disulfides stabilise this stretch: cysteine 4/cysteine 41, cysteine 13/cysteine 33, and cysteine 20/cysteine 26. Asparagine 25 is a glycosylation site (N-linked (GlcNAc...) asparagine).

Produced by the albumen gland of the egg cordons.

Its subcellular location is the secreted. In terms of biological role, water-borne pheromone that attract the marine mollusk Aplysia into breeding aggregations and coordinate male and female reproductive behavior within the aggregation. In Aplysia depilans (Sea hare), this protein is Attractin (ATT).